Consider the following 1059-residue polypeptide: Carbamoyl phosphate synthase large chain (1059 aa).

The tract at residues 1–401 (MPKRSDIKKI…SLLKACRSLE (401 aa)) is carboxyphosphate synthetic domain. Positions 129, 169, 175, 176, 208, 210, 215, 241, 242, 243, 284, and 298 each coordinate ATP. Positions 133 to 327 (KQLMEELEQP…IAKLAAKIAV (195 aa)) constitute an ATP-grasp 1 domain. Mg(2+) is bound by residues Gln-284, Glu-298, and Asn-300. Mn(2+) is bound by residues Gln-284, Glu-298, and Asn-300. The interval 402–546 (IGVYHNEMSE…YSTYEWENES (145 aa)) is oligomerization domain. The interval 547 to 929 (IKSDKESVIV…ALYKAFEASY (383 aa)) is carbamoyl phosphate synthetic domain. Residues 671–861 (EQALKDLDIP…MAQVATNLIL (191 aa)) form the ATP-grasp 2 domain. Arg-707, Ser-746, Ile-748, Glu-752, Gly-777, Val-778, His-779, Ser-780, Gln-820, and Glu-832 together coordinate ATP. Mg(2+) is bound by residues Gln-820, Glu-832, and Asn-834. Mn(2+) contacts are provided by Gln-820, Glu-832, and Asn-834. Residues 930–1059 (LHLPTFGNVI…ESRSFTTEAI (130 aa)) form the MGS-like domain. Residues 930–1059 (LHLPTFGNVI…ESRSFTTEAI (130 aa)) are allosteric domain.

It belongs to the CarB family. In terms of assembly, composed of two chains; the small (or glutamine) chain promotes the hydrolysis of glutamine to ammonia, which is used by the large (or ammonia) chain to synthesize carbamoyl phosphate. Tetramer of heterodimers (alpha,beta)4. The cofactor is Mg(2+). Mn(2+) is required as a cofactor.

The catalysed reaction is hydrogencarbonate + L-glutamine + 2 ATP + H2O = carbamoyl phosphate + L-glutamate + 2 ADP + phosphate + 2 H(+). It catalyses the reaction hydrogencarbonate + NH4(+) + 2 ATP = carbamoyl phosphate + 2 ADP + phosphate + 2 H(+). Its pathway is amino-acid biosynthesis; L-arginine biosynthesis; carbamoyl phosphate from bicarbonate: step 1/1. It functions in the pathway pyrimidine metabolism; UMP biosynthesis via de novo pathway; (S)-dihydroorotate from bicarbonate: step 1/3. Large subunit of the glutamine-dependent carbamoyl phosphate synthetase (CPSase). CPSase catalyzes the formation of carbamoyl phosphate from the ammonia moiety of glutamine, carbonate, and phosphate donated by ATP, constituting the first step of 2 biosynthetic pathways, one leading to arginine and/or urea and the other to pyrimidine nucleotides. The large subunit (synthetase) binds the substrates ammonia (free or transferred from glutamine from the small subunit), hydrogencarbonate and ATP and carries out an ATP-coupled ligase reaction, activating hydrogencarbonate by forming carboxy phosphate which reacts with ammonia to form carbamoyl phosphate. This chain is Carbamoyl phosphate synthase large chain, found in Streptococcus thermophilus (strain ATCC BAA-250 / LMG 18311).